Reading from the N-terminus, the 306-residue chain is Probable L,D-transpeptidase YbiS (306 aa).

An N-terminal signal peptide occupies residues 1-24 (MNMKLKTLFAAAFAVVGFCSTASA). Residues 99-234 (EGIVINSAEM…VPVGTRVQFI (136 aa)) form the L,D-TPase catalytic domain. The active-site Proton donor/acceptor is H194. Residue C210 is the Nucleophile of the active site.

The protein belongs to the YkuD family.

The protein localises to the periplasm. Its pathway is cell wall biogenesis; peptidoglycan biosynthesis. In terms of biological role, responsible, at least in part, for anchoring of the major outer membrane lipoprotein (Lpp) to the peptidoglycan via a meso-diaminopimelyl-L-Lys- bond on the terminal residue of Lpp. This chain is Probable L,D-transpeptidase YbiS (ybiS), found in Escherichia coli O6:H1 (strain CFT073 / ATCC 700928 / UPEC).